The chain runs to 226 residues: Ribose-5-phosphate isomerase A (226 aa).

Residues 33–36, 86–89, and 99–102 each bind substrate; these read TGST, DGAD, and KGGG. Residue glutamate 108 is the Proton acceptor of the active site. Lysine 126 is a binding site for substrate.

Belongs to the ribose 5-phosphate isomerase family. As to quaternary structure, homodimer.

The enzyme catalyses aldehydo-D-ribose 5-phosphate = D-ribulose 5-phosphate. It functions in the pathway carbohydrate degradation; pentose phosphate pathway; D-ribose 5-phosphate from D-ribulose 5-phosphate (non-oxidative stage): step 1/1. Functionally, catalyzes the reversible conversion of ribose-5-phosphate to ribulose 5-phosphate. This is Ribose-5-phosphate isomerase A from Bordetella parapertussis (strain 12822 / ATCC BAA-587 / NCTC 13253).